Consider the following 275-residue polypeptide: Light-independent protochlorophyllide reductase iron-sulfur ATP-binding protein (275 aa).

Residues 12–17 and lysine 41 contribute to the ATP site; that span reads GIGKST. Serine 16 provides a ligand contact to Mg(2+). Positions 97 and 131 each coordinate [4Fe-4S] cluster. Residue 182–183 participates in ATP binding; sequence NR.

It belongs to the NifH/BchL/ChlL family. Homodimer. Protochlorophyllide reductase is composed of three subunits; BchL, BchN and BchB. Requires [4Fe-4S] cluster as cofactor.

The catalysed reaction is chlorophyllide a + oxidized 2[4Fe-4S]-[ferredoxin] + 2 ADP + 2 phosphate = protochlorophyllide a + reduced 2[4Fe-4S]-[ferredoxin] + 2 ATP + 2 H2O. The protein operates within porphyrin-containing compound metabolism; bacteriochlorophyll biosynthesis (light-independent). In terms of biological role, component of the dark-operative protochlorophyllide reductase (DPOR) that uses Mg-ATP and reduced ferredoxin to reduce ring D of protochlorophyllide (Pchlide) to form chlorophyllide a (Chlide). This reaction is light-independent. The L component serves as a unique electron donor to the NB-component of the complex, and binds Mg-ATP. In Pelodictyon phaeoclathratiforme (strain DSM 5477 / BU-1), this protein is Light-independent protochlorophyllide reductase iron-sulfur ATP-binding protein.